Here is a 156-residue protein sequence, read N- to C-terminus: Small ribosomal subunit protein uS7 (156 aa).

The protein belongs to the universal ribosomal protein uS7 family. As to quaternary structure, part of the 30S ribosomal subunit. Contacts proteins S9 and S11.

In terms of biological role, one of the primary rRNA binding proteins, it binds directly to 16S rRNA where it nucleates assembly of the head domain of the 30S subunit. Is located at the subunit interface close to the decoding center, probably blocks exit of the E-site tRNA. This Clostridium beijerinckii (strain ATCC 51743 / NCIMB 8052) (Clostridium acetobutylicum) protein is Small ribosomal subunit protein uS7.